Consider the following 323-residue polypeptide: HPr kinase/phosphorylase (323 aa).

Active-site residues include H146 and K167. ATP is bound at residue 161 to 168 (GESGLGKS). S168 is a binding site for Mg(2+). D185 (proton acceptor; for phosphorylation activity. Proton donor; for dephosphorylation activity) is an active-site residue. Positions 209–218 (LEVRGLGLLD) are important for the catalytic mechanism of both phosphorylation and dephosphorylation. E210 contributes to the Mg(2+) binding site. The active site involves R250. The important for the catalytic mechanism of dephosphorylation stretch occupies residues 271-276 (QVAAGR).

It belongs to the HPrK/P family. Homohexamer. Mg(2+) serves as cofactor.

The enzyme catalyses [HPr protein]-L-serine + ATP = [HPr protein]-O-phospho-L-serine + ADP + H(+). It catalyses the reaction [HPr protein]-O-phospho-L-serine + phosphate + H(+) = [HPr protein]-L-serine + diphosphate. In terms of biological role, catalyzes the ATP- as well as the pyrophosphate-dependent phosphorylation of a specific serine residue in HPr, a phosphocarrier protein of the phosphoenolpyruvate-dependent sugar phosphotransferase system (PTS). HprK/P also catalyzes the pyrophosphate-producing, inorganic phosphate-dependent dephosphorylation (phosphorolysis) of seryl-phosphorylated HPr (P-Ser-HPr). The polypeptide is HPr kinase/phosphorylase (Cupriavidus pinatubonensis (strain JMP 134 / LMG 1197) (Cupriavidus necator (strain JMP 134))).